The primary structure comprises 322 residues: Altered inheritance of mitochondria protein 32 (322 aa).

This sequence belongs to the AIM32 family.

The polypeptide is Altered inheritance of mitochondria protein 32 (AIM32) (Kluyveromyces lactis (strain ATCC 8585 / CBS 2359 / DSM 70799 / NBRC 1267 / NRRL Y-1140 / WM37) (Yeast)).